A 253-amino-acid polypeptide reads, in one-letter code: 2-dehydro-3-deoxy-D-gluconate 5-dehydrogenase (253 aa).

Position 14–38 (14–38) interacts with NAD(+); that stretch reads LITGCDTGLGQGMAVGLAEAGCDIV. Substrate is bound at residue S145. Residue Y158 is the Proton acceptor of the active site.

It belongs to the short-chain dehydrogenases/reductases (SDR) family.

It catalyses the reaction 2-dehydro-3-deoxy-D-gluconate + NAD(+) = 3-deoxy-D-glycero-2,5-hexodiulosonate + NADH + H(+). The protein operates within glycan metabolism; pectin degradation; 2-dehydro-3-deoxy-D-gluconate from pectin: step 5/5. In terms of biological role, catalyzes the reduction of 2,5-diketo-3-deoxygluconate (DKII or 4,6-dihydroxy-2,5-dioxohexanoate) into 2-keto-3-deoxygluconate (KDG or 2-dehydro-3-deoxygluconate) with a concomitant oxidation of NADH. The chain is 2-dehydro-3-deoxy-D-gluconate 5-dehydrogenase (kduD) from Dickeya dadantii (strain 3937) (Erwinia chrysanthemi (strain 3937)).